Here is a 938-residue protein sequence, read N- to C-terminus: AP-2 complex subunit alpha-2 (938 aa).

A 1,2-diacyl-sn-glycero-3-phospho-(1D-myo-inositol-3,4,5-trisphosphate)-binding positions include Arg-11 to Gly-12, Lys-43, Tyr-53, and Lys-57 to Lys-61. Positions Leu-616 to Pro-677 are disordered. Low complexity predominate over residues Pro-645 to Ala-668.

This sequence belongs to the adaptor complexes large subunit family. Adaptor protein complex 2 (AP-2) is a heterotetramer composed of two large adaptins (alpha-type subunit AP2A1 or AP2A2 and beta-type subunit AP2B1), a medium adaptin (mu-type subunit AP2M1) and a small adaptin (sigma-type subunit AP2S1). Binds clathrin. Binds EPN1, EPS15, AMPH, SNAP91 and BIN1. Interacts with HIP1. Interacts with DGKD. Interacts with DENND1A, DENND1B and DENND1C. Interacts with FCHO1. Interacts with ATAT1; this interaction is required for efficient alpha-tubulin acetylation by ATAT1. Interacts with KIAA1107. Together with AP2B1 and AP2M1, it interacts with ADAM10; this interaction facilitates ADAM10 endocytosis from the plasma membrane during long-term potentiation in hippocampal neurons. Interacts with CLN3 (via dileucine motif). Interacts with ABCB11; this interaction regulates cell membrane expression of ABCB11 through its internalization in a clathrin-dependent manner and its subsequent degradation. Interacts with DNAJC6.

The protein resides in the cell membrane. It localises to the membrane. It is found in the coated pit. Its function is as follows. Component of the adaptor protein complex 2 (AP-2). Adaptor protein complexes function in protein transport via transport vesicles in different membrane traffic pathways. Adaptor protein complexes are vesicle coat components and appear to be involved in cargo selection and vesicle formation. AP-2 is involved in clathrin-dependent endocytosis in which cargo proteins are incorporated into vesicles surrounded by clathrin (clathrin-coated vesicles, CCVs) which are destined for fusion with the early endosome. The clathrin lattice serves as a mechanical scaffold but is itself unable to bind directly to membrane components. Clathrin-associated adaptor protein (AP) complexes which can bind directly to both the clathrin lattice and to the lipid and protein components of membranes are considered to be the major clathrin adaptors contributing the CCV formation. AP-2 also serves as a cargo receptor to selectively sort the membrane proteins involved in receptor-mediated endocytosis. AP-2 seems to play a role in the recycling of synaptic vesicle membranes from the presynaptic surface. AP-2 recognizes Y-X-X-[FILMV] (Y-X-X-Phi) and [ED]-X-X-X-L-[LI] endocytosis signal motifs within the cytosolic tails of transmembrane cargo molecules. AP-2 may also play a role in maintaining normal post-endocytic trafficking through the ARF6-regulated, non-clathrin pathway. During long-term potentiation in hippocampal neurons, AP-2 is responsible for the endocytosis of ADAM10. The AP-2 alpha subunit binds polyphosphoinositide-containing lipids, positioning AP-2 on the membrane. The AP-2 alpha subunit acts via its C-terminal appendage domain as a scaffolding platform for endocytic accessory proteins. The AP-2 alpha and AP-2 sigma subunits are thought to contribute to the recognition of the [ED]-X-X-X-L-[LI] motif. The protein is AP-2 complex subunit alpha-2 of Bos taurus (Bovine).